The chain runs to 696 residues: PWWP domain-containing DNA repair factor 3B (696 aa).

2 stretches are compositionally biased toward polar residues: residues 119–128 and 290–300; these read QNVPQKQSDS and CLDTSQNQPSM. Disordered stretches follow at residues 119–143 and 278–303; these read QNVPQKQSDSPPHKKYRKDEGDLPG and NIEDPGEGPSNPCLDTSQNQPSMESE. A Phosphoserine modification is found at Ser-128. In terms of domain architecture, PWWP spans 392-453; it reads TGMIVWFKYQ…KKFDCKEKQM (62 aa).

It belongs to the PWWP3A family.

This chain is PWWP domain-containing DNA repair factor 3B, found in Homo sapiens (Human).